The primary structure comprises 501 residues: Suppressor of hairless protein homolog (501 aa).

DNA-binding stretches follow at residues 58–68 (QKSYGNEKRFF), 166–171 (SKPSKK), and 193–198 (RLRSQT). One can recognise an IPT/TIG domain in the interval 356-446 (PVVESLQLNG…YSTSLTFTYT (91 aa)).

Belongs to the Su(H) family. Interacts with activated Notch proteins. Forms a ternary complex with nrarp and the intracellular domain (NICD) of notch1. Interacts with rita1, leading to nuclear export, prevent the interaction between rbpj and NICD product and subsequent down-regulation of the Notch signaling pathway.

It is found in the nucleus. The protein resides in the cytoplasm. Its function is as follows. Transcriptional regulator that plays a central role in Notch signaling, a signaling pathway involved in cell-cell communication that regulates a broad spectrum of cell-fate determinations. Acts as a transcriptional repressor when it is not associated with Notch proteins. When associated with some NICD product of Notch proteins (Notch intracellular domain), it acts as a transcriptional activator that activates transcription of Notch target genes. Required for the transcriptional activation of ESR1, suggesting that it is required during primary neurogenesis in embryos. Binds to the oxygen responsive element of COX4I2 and activates its transcription under hypoxia conditions (4% oxygen). This chain is Suppressor of hairless protein homolog (rbpj), found in Xenopus laevis (African clawed frog).